We begin with the raw amino-acid sequence, 314 residues long: Methionyl-tRNA formyltransferase (314 aa).

113–116 (SLLP) is a binding site for (6S)-5,6,7,8-tetrahydrofolate.

It belongs to the Fmt family.

It catalyses the reaction L-methionyl-tRNA(fMet) + (6R)-10-formyltetrahydrofolate = N-formyl-L-methionyl-tRNA(fMet) + (6S)-5,6,7,8-tetrahydrofolate + H(+). Its function is as follows. Attaches a formyl group to the free amino group of methionyl-tRNA(fMet). The formyl group appears to play a dual role in the initiator identity of N-formylmethionyl-tRNA by promoting its recognition by IF2 and preventing the misappropriation of this tRNA by the elongation apparatus. This Pseudomonas aeruginosa (strain LESB58) protein is Methionyl-tRNA formyltransferase.